The chain runs to 330 residues: GMP reductase (330 aa).

The Thioimidate intermediate role is filled by Cys-180. 209-232 (LIADGGIRHNGDIAKSVRFGASMV) is a binding site for NADP(+).

This sequence belongs to the IMPDH/GMPR family. GuaC type 2 subfamily.

The catalysed reaction is IMP + NH4(+) + NADP(+) = GMP + NADPH + 2 H(+). Functionally, catalyzes the irreversible NADPH-dependent deamination of GMP to IMP. It functions in the conversion of nucleobase, nucleoside and nucleotide derivatives of G to A nucleotides, and in maintaining the intracellular balance of A and G nucleotides. In Lactobacillus gasseri (strain ATCC 33323 / DSM 20243 / BCRC 14619 / CIP 102991 / JCM 1131 / KCTC 3163 / NCIMB 11718 / NCTC 13722 / AM63), this protein is GMP reductase.